We begin with the raw amino-acid sequence, 235 residues long: Eukaryotic translation initiation factor 4E-1 (235 aa).

The segment at 1-36 (MVVEETIKATSTEDLSNTIANQNPRGRGGDEDEELE) is disordered. The span at 8–24 (KATSTEDLSNTIANQNP) shows a compositional bias: polar residues. 2 EIF4G-binding regions span residues 60–63 (HPLE) and 70–106 (FDNP…NNIH). MRNA is bound by residues 78–83 (KQATWG), Lys-110, and 128–129 (WE). An intrachain disulfide couples Cys-133 to Cys-171. Residues 154–163 (YTLLAMIGEQ) form an EIF4G-binding region. MRNA-binding positions include 178 to 183 (RSGQDK) and 223 to 227 (KKFDR).

This sequence belongs to the eukaryotic initiation factor 4E family. As to quaternary structure, EIF4F is a multi-subunit complex, the composition of which varies with external and internal environmental conditions. It is composed of at least EIF4A, EIF4E and EIF4G. EIF4E is also known to interact with other partners. In higher plants two isoforms of EIF4F have been identified, named isoform EIF4F and isoform EIF(iso)4F. Isoform EIF4F has subunits p220 and p26, whereas isoform EIF(iso)4F has subunits p82 and p28. (Microbial infection) Interacts with potyvirus viral genome-linked protein (VPg); this interaction is possible in susceptible hosts but impaired in resistant plants. Post-translationally, according to the redox status, the Cys-133-Cys-171 disulfide bridge may have a role in regulating protein function by affecting its ability to bind capped mRNA.

The protein resides in the nucleus. Its subcellular location is the cytoplasm. Functionally, component of the protein complex eIF4F, which is involved in the recognition of the mRNA cap, ATP-dependent unwinding of 5'-terminal secondary structure and recruitment of mRNA to the ribosome. Recognizes and binds the 7-methylguanosine-containing mRNA cap during an early step in the initiation of protein synthesis and facilitates ribosome binding by inducing the unwinding of the mRNAs secondary structures. Key component of recessive resistance to potyviruses. In terms of biological role, (Microbial infection) Susceptibility host factor required for viral infection by recruiting viral RNAs to the host ribosomal complex via an interaction with viral genome-linked protein (VPg). In Citrullus lanatus (Watermelon), this protein is Eukaryotic translation initiation factor 4E-1.